The sequence spans 319 residues: Ornithine carbamoyltransferase (319 aa).

Carbamoyl phosphate-binding positions include 63–66, Gln90, Arg114, and 141–144; these read STRT and HPCQ. Residues Asn172, Asp236, and 240-241 each bind L-ornithine; that span reads SM. Residues 276–277 and Arg304 each bind carbamoyl phosphate; that span reads CL.

This sequence belongs to the aspartate/ornithine carbamoyltransferase superfamily. OTCase family.

It localises to the cytoplasm. It carries out the reaction carbamoyl phosphate + L-ornithine = L-citrulline + phosphate + H(+). The protein operates within amino-acid biosynthesis; L-arginine biosynthesis; L-arginine from L-ornithine and carbamoyl phosphate: step 1/3. Functionally, reversibly catalyzes the transfer of the carbamoyl group from carbamoyl phosphate (CP) to the N(epsilon) atom of ornithine (ORN) to produce L-citrulline. The sequence is that of Ornithine carbamoyltransferase from Halalkalibacterium halodurans (strain ATCC BAA-125 / DSM 18197 / FERM 7344 / JCM 9153 / C-125) (Bacillus halodurans).